The primary structure comprises 1097 residues: Platelet-derived growth factor receptor beta (1097 aa).

The signal sequence occupies residues 1 to 31; that stretch reads MGLPEVMPASVLRGQLLLFVLLLLGPQISQG. 3 consecutive Ig-like C2-type domains span residues 32–119, 128–209, and 213–308; these read LVIT…YIFV, PMDS…YSLQ, and INVS…INVT. Residues 32-531 are Extracellular-facing; sequence LVITPPGPEF…VVPHSLPFKV (500 aa). N-linked (GlcNAc...) asparagine glycans are attached at residues N44, N88, and N102. The cysteines at positions 53 and 99 are disulfide-linked. A disulfide bridge connects residues C148 and C189. N-linked (GlcNAc...) asparagine glycosylation is present at N214. A disulfide bridge links C234 with C290. Residues N291, N306, N353, N370, N444, N467, and N478 are each glycosylated (N-linked (GlcNAc...) asparagine). The 109-residue stretch at 415 to 523 folds into the Ig-like C2-type 4 domain; that stretch reads PVRVLELSES…GRDSQEVTVV (109 aa). A disulfide bond links C435 and C507. Residues 532–552 form a helical membrane-spanning segment; that stretch reads VVISAILALVVLTVISLIILI. The Cytoplasmic portion of the chain corresponds to 553-1097; it reads MLWQRKPRYE…PLAEAEDSFL (545 aa). Y561, Y578, and Y580 each carry phosphotyrosine; by autocatalysis. The 363-residue stretch at 599–961 folds into the Protein kinase domain; sequence LVLGRTLGSG…QLVLLLERLL (363 aa). ATP is bound by residues 605–613 and K633; that span reads LGSGAFGQV. Y685 is modified (phosphotyrosine; by ABL1 and ABL2). Residues Y715, Y739, Y750, Y762, Y770, Y774, and Y777 each carry the phosphotyrosine; by autocatalysis modification. The Proton acceptor role is filled by D825. At Y856 the chain carries Phosphotyrosine; by autocatalysis. A phosphotyrosine; by ABL1 and ABL2 mark is found at Y933 and Y969. A phosphotyrosine; by autocatalysis mark is found at Y1008 and Y1020. The interval 1016 to 1097 is disordered; it reads TDNDYIIPLP…PLAEAEDSFL (82 aa). A compositionally biased stretch (polar residues) spans 1042–1059; sequence SLASSTLNEVNTSSTISC. Over residues 1072–1081 the composition is skewed to low complexity; sequence EPEAQLEQPQ.

It belongs to the protein kinase superfamily. Tyr protein kinase family. CSF-1/PDGF receptor subfamily. In terms of assembly, interacts with homodimeric PDGFB and PDGFD, and with heterodimers formed by PDGFA and PDGFB. May also interact with homodimeric PDGFC. Monomer in the absence of bound ligand. Interaction with homodimeric PDGFB, heterodimers formed by PDGFA and PDGFB or homodimeric PDGFD, leads to receptor dimerization, where both PDGFRA homodimers and heterodimers with PDGFRB are observed. Interacts with SH2B2/APS. Interacts directly (tyrosine phosphorylated) with SHB. Interacts (tyrosine phosphorylated) with PIK3R1 and RASA1. Interacts (tyrosine phosphorylated) with CBL. Interacts (tyrosine phosphorylated) with SRC and SRC family kinases. Interacts (tyrosine phosphorylated) with PIK3C2B, maybe indirectly. Interacts (tyrosine phosphorylated) with SHC1, GRB7, GRB10 and NCK1. Interaction with GRB2 is mediated by SHC1. Interacts (via C-terminus) with NHERF1. N-glycosylated. In terms of processing, ubiquitinated. After autophosphorylation, the receptor is polyubiquitinated, leading to its degradation. Post-translationally, autophosphorylated on tyrosine residues upon ligand binding. Autophosphorylation occurs in trans, i.e. one subunit of the dimeric receptor phosphorylates tyrosine residues on the other subunit. Phosphorylation at Tyr-578, and to a lesser degree, Tyr-580 is important for interaction with SRC. Phosphorylation at Tyr-715 is important for interaction with GRB2. Phosphorylation at Tyr-739 and Tyr-750 is important for interaction with PIK3R1. Phosphorylation at Tyr-750 is important for interaction with NCK1. Phosphorylation at Tyr-770 and Tyr-856 is important for interaction with RASA1/GAP. Phosphorylation at Tyr-856 is important for efficient phosphorylation of PLCG1 and PTPN11, resulting in increased phosphorylation of AKT1, MAPK1/ERK2 and/or MAPK3/ERK1, PDCD6IP/ALIX and STAM, and in increased cell proliferation. Phosphorylation at Tyr-1008 is important for interaction with PTPN11. Phosphorylation at Tyr-1008 and Tyr-1020 is important for interaction with PLCG1. Dephosphorylated by PTPRJ at Tyr-750, Tyr-856, Tyr-1008 and Tyr-1020. Dephosphorylated by PTPN2 at Tyr-578 and Tyr-1020.

Its subcellular location is the cell membrane. The protein localises to the cytoplasmic vesicle. It is found in the lysosome lumen. The catalysed reaction is L-tyrosyl-[protein] + ATP = O-phospho-L-tyrosyl-[protein] + ADP + H(+). With respect to regulation, present in an inactive conformation in the absence of bound ligand. Binding of PDGFB and/or PDGFD leads to dimerization and activation by autophosphorylation on tyrosine residues. Tyrosine-protein kinase that acts as a cell-surface receptor for homodimeric PDGFB and PDGFD and for heterodimers formed by PDGFA and PDGFB, and plays an essential role in the regulation of embryonic development, cell proliferation, survival, differentiation, chemotaxis and migration. Plays an essential role in blood vessel development by promoting proliferation, migration and recruitment of pericytes and smooth muscle cells to endothelial cells. Plays a role in the migration of vascular smooth muscle cells and the formation of neointima at vascular injury sites. Required for normal development of the cardiovascular system. Required for normal recruitment of pericytes (mesangial cells) in the kidney glomerulus, and for normal formation of a branched network of capillaries in kidney glomeruli. Promotes rearrangement of the actin cytoskeleton and the formation of membrane ruffles. Binding of its cognate ligands - homodimeric PDGFB, heterodimers formed by PDGFA and PDGFB or homodimeric PDGFD -leads to the activation of several signaling cascades; the response depends on the nature of the bound ligand and is modulated by the formation of heterodimers between PDGFRA and PDGFRB. Phosphorylates PLCG1, PIK3R1, PTPN11, RASA1/GAP, CBL, SHC1 and NCK1. Activation of PLCG1 leads to the production of the cellular signaling molecules diacylglycerol and inositol 1,4,5-trisphosphate, mobilization of cytosolic Ca(2+) and the activation of protein kinase C. Phosphorylation of PIK3R1, the regulatory subunit of phosphatidylinositol 3-kinase, leads to the activation of the AKT1 signaling pathway. Phosphorylation of SHC1, or of the C-terminus of PTPN11, creates a binding site for GRB2, resulting in the activation of HRAS, RAF1 and down-stream MAP kinases, including MAPK1/ERK2 and/or MAPK3/ERK1. Promotes phosphorylation and activation of SRC family kinases. Promotes phosphorylation of PDCD6IP/ALIX and STAM. Receptor signaling is down-regulated by protein phosphatases that dephosphorylate the receptor and its down-stream effectors, and by rapid internalization of the activated receptor. The chain is Platelet-derived growth factor receptor beta (Pdgfrb) from Rattus norvegicus (Rat).